The primary structure comprises 155 residues: 3-hydroxyacyl-[acyl-carrier-protein] dehydratase FabZ (155 aa).

Residue histidine 58 is part of the active site.

Belongs to the thioester dehydratase family. FabZ subfamily.

The protein localises to the cytoplasm. It carries out the reaction a (3R)-hydroxyacyl-[ACP] = a (2E)-enoyl-[ACP] + H2O. Involved in unsaturated fatty acids biosynthesis. Catalyzes the dehydration of short chain beta-hydroxyacyl-ACPs and long chain saturated and unsaturated beta-hydroxyacyl-ACPs. This is 3-hydroxyacyl-[acyl-carrier-protein] dehydratase FabZ from Rhizobium etli (strain ATCC 51251 / DSM 11541 / JCM 21823 / NBRC 15573 / CFN 42).